The sequence spans 330 residues: Phosphate acyltransferase (330 aa).

The protein belongs to the PlsX family. Homodimer. Probably interacts with PlsY.

It localises to the cytoplasm. It carries out the reaction a fatty acyl-[ACP] + phosphate = an acyl phosphate + holo-[ACP]. It functions in the pathway lipid metabolism; phospholipid metabolism. Its function is as follows. Catalyzes the reversible formation of acyl-phosphate (acyl-PO(4)) from acyl-[acyl-carrier-protein] (acyl-ACP). This enzyme utilizes acyl-ACP as fatty acyl donor, but not acyl-CoA. This is Phosphate acyltransferase from Bacillus mycoides (strain KBAB4) (Bacillus weihenstephanensis).